The following is a 169-amino-acid chain: Small ribosomal subunit protein uS5 (169 aa).

In terms of domain architecture, S5 DRBM spans 15 to 79 (LKDQVVAINR…ESAKKNLVKV (65 aa)).

This sequence belongs to the universal ribosomal protein uS5 family. As to quaternary structure, part of the 30S ribosomal subunit. Contacts proteins S4 and S8.

Functionally, with S4 and S12 plays an important role in translational accuracy. Located at the back of the 30S subunit body where it stabilizes the conformation of the head with respect to the body. The chain is Small ribosomal subunit protein uS5 from Koribacter versatilis (strain Ellin345).